Reading from the N-terminus, the 245-residue chain is Octanoyltransferase (245 aa).

Positions 54–242 (QNAPEQVWLL…AFEQIFGPTI (189 aa)) constitute a BPL/LPL catalytic domain. Substrate-binding positions include 93–100 (RGGEFTYH), 173–175 (AIG), and 186–188 (GVS). The active-site Acyl-thioester intermediate is the Cys-204.

It belongs to the LipB family.

The protein resides in the cytoplasm. It catalyses the reaction octanoyl-[ACP] + L-lysyl-[protein] = N(6)-octanoyl-L-lysyl-[protein] + holo-[ACP] + H(+). The protein operates within protein modification; protein lipoylation via endogenous pathway; protein N(6)-(lipoyl)lysine from octanoyl-[acyl-carrier-protein]: step 1/2. Catalyzes the transfer of endogenously produced octanoic acid from octanoyl-acyl-carrier-protein onto the lipoyl domains of lipoate-dependent enzymes. Lipoyl-ACP can also act as a substrate although octanoyl-ACP is likely to be the physiological substrate. This Bartonella quintana (strain Toulouse) (Rochalimaea quintana) protein is Octanoyltransferase.